The primary structure comprises 230 residues: Ribonuclease 3 (230 aa).

In terms of domain architecture, RNase III spans 10–133; that stretch reads DPRLLSRIGY…IIGAIYLDSG (124 aa). Residue Glu46 coordinates Mg(2+). The active site involves Asp50. Positions 119 and 122 each coordinate Mg(2+). Residue Glu122 is part of the active site. Residues 161-230 form the DRBM domain; sequence DPKSRLQEYL…AAEILKLLEQ (70 aa).

Belongs to the ribonuclease III family. In terms of assembly, homodimer. Mg(2+) serves as cofactor.

Its subcellular location is the cytoplasm. It carries out the reaction Endonucleolytic cleavage to 5'-phosphomonoester.. Digests double-stranded RNA. Involved in the processing of primary rRNA transcript to yield the immediate precursors to the large and small rRNAs (23S and 16S). Processes some mRNAs, and tRNAs when they are encoded in the rRNA operon. Processes pre-crRNA and tracrRNA of type II CRISPR loci if present in the organism. The sequence is that of Ribonuclease 3 (rnc) from Acinetobacter pittii (strain PHEA-2).